The sequence spans 548 residues: Stretch-activated cation channel MID1 (548 aa).

Positions M1 to G20 are cleaved as a signal peptide. Over L21 to D341 the chain is Extracellular. Residues N32, N70, N112, N125, N159, N175, N228, N238, N265, N282, N285, N291, and N324 are each glycosylated (N-linked (GlcNAc...) asparagine). Residues G342–T358 form a helical membrane-spanning segment. Topologically, residues R359–T548 are cytoplasmic.

In terms of assembly, forms an oligomer with a molecular mass of 200 kDa by disulfide bonds. Interacts with CCH1 to form a Ca(2+) influx channel. N-glycosylated.

The protein localises to the cell membrane. Functionally, calcium-permeable, cation-selective stretch-activated channel (SAC) that functions together with CCH1 to mediate calcium entry into cells. Required during mating. Together with CCH1, essential for tolerance to iron stress, which leads to an increased oxidative poise, and to cold stress. This chain is Stretch-activated cation channel MID1 (MID1), found in Saccharomyces cerevisiae (strain ATCC 204508 / S288c) (Baker's yeast).